The sequence spans 572 residues: Protein 5NUC (572 aa).

Residues 1–25 (MLFFLNFFVLVFSIELALLTASAAA) form the signal peptide. Residues Asp39 and His41 each contribute to the Zn(2+) site. A disulfide bridge connects residues Cys54 and Cys64. Asn82 carries N-linked (GlcNAc...) asparagine glycosylation. Zn(2+) contacts are provided by Asp93, Asn125, His227, and His250. A disulfide bond links Cys360 and Cys365. Residues Arg361, Gln399, Arg404, and Phe427 each coordinate substrate. N-linked (GlcNAc...) asparagine glycosylation is found at Asn454 and Asn490. An intrachain disulfide couples Cys488 to Cys491. 512–518 (FMKDGGD) serves as a coordination point for substrate.

The protein belongs to the 5'-nucleotidase family. Requires Zn(2+) as cofactor.

The enzyme catalyses UDP-sugar + H2O = UMP + alpha-D-aldose 1-phosphate.. It catalyses the reaction a ribonucleoside 5'-phosphate + H2O = a ribonucleoside + phosphate. Functionally, degradation of external UDP-glucose to uridine monophosphate and glucose-1-phosphate, which can then be used by the cell. This Lutzomyia longipalpis (Sand fly) protein is Protein 5NUC (5NUC).